Here is a 508-residue protein sequence, read N- to C-terminus: E3 ubiquitin-protein ligase XBAT32 (508 aa).

ANK repeat units lie at residues 50 to 79 (VRNS…DINL), 83 to 112 (RGQT…NIHR), 117 to 147 (NGGT…SVPN), 177 to 206 (GGIT…SVTQ), and 220 to 249 (AGST…CLAA). An RING-type zinc finger spans residues 321 to 372 (CAVCLERKCTVAADGCAHEFCTNCALYLSTTSITSSKTSNVTPGSVPCPLCR).

In terms of assembly, interacts with ACS4 and ACS7. Expressed in the vascular system of primary root, vascular tissue of leaves, stems and anthers.

The enzyme catalyses S-ubiquitinyl-[E2 ubiquitin-conjugating enzyme]-L-cysteine + [acceptor protein]-L-lysine = [E2 ubiquitin-conjugating enzyme]-L-cysteine + N(6)-ubiquitinyl-[acceptor protein]-L-lysine.. The protein operates within protein modification; protein ubiquitination. Functionally, E3 ubiquitin-protein ligase that mediates ubiquitination of ACC synthases (ACS). Negatively regulates ethylene biosynthesis probably via ubiquitin-dependent degradation of ACS4 and ACS7 enzymes. Regulates lateral root formation and development by controlling ethylene production which inhibits lateral root formation at high concentration. This is E3 ubiquitin-protein ligase XBAT32 (XBAT32) from Arabidopsis thaliana (Mouse-ear cress).